A 202-amino-acid polypeptide reads, in one-letter code: Cutinase (202 aa).

Residues 1–20 (MKTSAQQLLSALLLPLSVLA) form the signal peptide. C31 and C106 are joined by a disulfide. Catalysis depends on S117, which acts as the Nucleophile. C165 and C172 are disulfide-bonded. The active site involves D169. H182 acts as the Proton donor/acceptor in catalysis.

It belongs to the cutinase family. Post-translationally, the 2 disulfide bonds play a critical role in holding the catalytic residues in juxta-position; reduction of the disulfide bridges results in the complete inactivation of the enzyme.

The protein localises to the secreted. The catalysed reaction is cutin + H2O = cutin monomers.. Catalyzes the hydrolysis of complex carboxylic polyesters found in the cell wall of plants. Degrades cutin, a macromolecule that forms the structure of the plant cuticle. Allows pathogenic fungi to penetrate through the cuticular barrier into the host plant during the initial stage of fungal infection. The sequence is that of Cutinase from Botryotinia fuckeliana (Noble rot fungus).